The primary structure comprises 521 residues: Feruloyl esterase B (521 aa).

A signal peptide spans methionine 1–alanine 17. 2 cysteine pairs are disulfide-bonded: cysteine 26–cysteine 72 and cysteine 61–cysteine 111. N-linked (GlcNAc...) asparagine glycosylation is found at asparagine 37, asparagine 51, asparagine 77, asparagine 95, asparagine 144, and asparagine 177. 3 cysteine pairs are disulfide-bonded: cysteine 184/cysteine 438, cysteine 253/cysteine 270, and cysteine 279/cysteine 288. Serine 185 (acyl-ester intermediate) is an active-site residue. The Ca(2+) site is built by aspartate 254, aspartate 257, alanine 259, aspartate 261, and isoleucine 263. 4 N-linked (GlcNAc...) asparagine glycosylation sites follow: asparagine 284, asparagine 347, asparagine 352, and asparagine 378. Catalysis depends on charge relay system residues aspartate 397 and histidine 437. N-linked (GlcNAc...) asparagine glycans are attached at residues asparagine 488 and asparagine 511. An intrachain disulfide couples cysteine 498 to cysteine 520.

The protein belongs to the tannase family. As to quaternary structure, homodimer. In terms of processing, glycosylated.

The protein resides in the secreted. It catalyses the reaction feruloyl-polysaccharide + H2O = ferulate + polysaccharide.. Inhibited by the specific serine esterase inhibitor AEBSF. Its function is as follows. Involved in degradation of plant cell walls. Hydrolyzes of the feruloyl-arabinose ester bond in arabinoxylans as well as the feruloyl-galactose and feruloyl-arabinose ester bonds in pectin. The polypeptide is Feruloyl esterase B (faeB) (Aspergillus niger).